Consider the following 134-residue polypeptide: Phosphoribosyl-AMP cyclohydrolase (134 aa).

D80 provides a ligand contact to Mg(2+). Zn(2+) is bound at residue C81. The Mg(2+) site is built by D82 and D84. Positions 98 and 105 each coordinate Zn(2+).

The protein belongs to the PRA-CH family. As to quaternary structure, homodimer. Requires Mg(2+) as cofactor. It depends on Zn(2+) as a cofactor.

It localises to the cytoplasm. It carries out the reaction 1-(5-phospho-beta-D-ribosyl)-5'-AMP + H2O = 1-(5-phospho-beta-D-ribosyl)-5-[(5-phospho-beta-D-ribosylamino)methylideneamino]imidazole-4-carboxamide. It participates in amino-acid biosynthesis; L-histidine biosynthesis; L-histidine from 5-phospho-alpha-D-ribose 1-diphosphate: step 3/9. Functionally, catalyzes the hydrolysis of the adenine ring of phosphoribosyl-AMP. The protein is Phosphoribosyl-AMP cyclohydrolase of Bordetella pertussis (strain Tohama I / ATCC BAA-589 / NCTC 13251).